A 156-amino-acid polypeptide reads, in one-letter code: tRNA (cytidine(34)-2'-O)-methyltransferase (156 aa).

Residues Gly-100, Ile-122, and Ser-130 each contribute to the S-adenosyl-L-methionine site.

The protein belongs to the class IV-like SAM-binding methyltransferase superfamily. RNA methyltransferase TrmH family. TrmL subfamily. In terms of assembly, homodimer.

The protein localises to the cytoplasm. The catalysed reaction is cytidine(34) in tRNA + S-adenosyl-L-methionine = 2'-O-methylcytidine(34) in tRNA + S-adenosyl-L-homocysteine + H(+). It carries out the reaction 5-carboxymethylaminomethyluridine(34) in tRNA(Leu) + S-adenosyl-L-methionine = 5-carboxymethylaminomethyl-2'-O-methyluridine(34) in tRNA(Leu) + S-adenosyl-L-homocysteine + H(+). Methylates the ribose at the nucleotide 34 wobble position in the two leucyl isoacceptors tRNA(Leu)(CmAA) and tRNA(Leu)(cmnm5UmAA). Catalyzes the methyl transfer from S-adenosyl-L-methionine to the 2'-OH of the wobble nucleotide. The polypeptide is tRNA (cytidine(34)-2'-O)-methyltransferase (Aeromonas hydrophila subsp. hydrophila (strain ATCC 7966 / DSM 30187 / BCRC 13018 / CCUG 14551 / JCM 1027 / KCTC 2358 / NCIMB 9240 / NCTC 8049)).